We begin with the raw amino-acid sequence, 499 residues long: MLSTSSRSFKSKFRAAFWPVHNYELGKFIPMSALMFCILFNQNILRILKDSILISEISAEIAGFAKVYCVTPAAALFVIIYAKMINRFTFEKIFYYLSAFFISFFVLFAFVIYPNIHVFHVHPDNLADWMERYPHFKWYISLVGNWGYIVYYSLAELWPNIFYVLLFWQFANELTTTEEAKRFYTFFSLFGNSSLILVGFLMMNLSSEDTIIKKFMSISDSKITLVQVSTTIVAIVAIVCCVLVRFISKNVFTNPLFYAKAKSGRSTSERMGLIKSFKYIAKSKYLWLLLICSAAFGFAINLVEAVWKAKIKELYPTVNTYAEFNSLYILWTGVAIMVMTIIGNNVMRMHNWFVAAVISPVIIMVTGILFFVLIVFDQQILSLFDGAILMSPLALAVSIGGIQNILAKGTKYSIWDTSREMLYIPLDDELKTKGKAAVDVISAKVGKSSSGLVQSIIFTLVPTATFTSISPILMVVFTFVCLAWIYAVRKIYFEYQKIA.

11 helical membrane-spanning segments follow: residues 25 to 45 (LGKF…QNIL), 61 to 81 (IAGF…VIIY), 93 to 113 (IFYY…FVIY), 148 to 168 (YIVY…LLFW), 183 to 203 (FYTF…FLMM), 223 to 243 (ITLV…CCVL), 286 to 306 (LWLL…VEAV), 327 to 347 (LYIL…NNVM), 356 to 376 (AVIS…LIVF), 380 to 400 (ILSL…VSIG), and 468 to 488 (SISP…IYAV).

Belongs to the ADP/ATP translocase tlc family.

The protein localises to the cell membrane. Its function is as follows. Provides the rickettsial cell with host ATP in exchange for rickettsial ADP. This is an obligate exchange system. This energy acquiring activity is an important component of rickettsial parasitism. The sequence is that of ADP,ATP carrier protein 5 (tlcE) from Rickettsia felis (strain ATCC VR-1525 / URRWXCal2) (Rickettsia azadi).